We begin with the raw amino-acid sequence, 367 residues long: Putative F-box protein At3g21130 (367 aa).

In terms of domain architecture, F-box spans 4–50; the sequence is KRNTVYLSEDLIVEILSRVSAVSLARLRTTSKRWNALVKDERLAKKH.

This chain is Putative F-box protein At3g21130, found in Arabidopsis thaliana (Mouse-ear cress).